The sequence spans 391 residues: Beta sliding clamp (391 aa).

The protein belongs to the beta sliding clamp family. Forms a ring-shaped head-to-tail homodimer around DNA which binds and tethers DNA polymerases and other proteins to the DNA. The DNA replisome complex has a single clamp-loading complex (3 tau and 1 each of delta, delta', psi and chi subunits) which binds 3 Pol III cores (1 core on the leading strand and 2 on the lagging strand) each with a beta sliding clamp dimer. Additional proteins in the replisome are other copies of gamma, psi and chi, Ssb, DNA helicase and RNA primase.

Its subcellular location is the cytoplasm. In terms of biological role, confers DNA tethering and processivity to DNA polymerases and other proteins. Acts as a clamp, forming a ring around DNA (a reaction catalyzed by the clamp-loading complex) which diffuses in an ATP-independent manner freely and bidirectionally along dsDNA. Initially characterized for its ability to contact the catalytic subunit of DNA polymerase III (Pol III), a complex, multichain enzyme responsible for most of the replicative synthesis in bacteria; Pol III exhibits 3'-5' exonuclease proofreading activity. The beta chain is required for initiation of replication as well as for processivity of DNA replication. In Synechocystis sp. (strain ATCC 27184 / PCC 6803 / Kazusa), this protein is Beta sliding clamp (dnaN).